Reading from the N-terminus, the 523-residue chain is UDP-glucuronosyltransferase 3A1 (523 aa).

The signal sequence occupies residues 1-22 (MAGQQALLLFGFILPGLLFSEA). Residues 23-483 (AKILTVSLVG…HAFQQPWYEQ (461 aa)) are Extracellular-facing. Asn52 carries N-linked (GlcNAc...) asparagine glycosylation. Residues 484–504 (YLLDVFLFLLVVTLGTMWLCG) form a helical membrane-spanning segment. At 505–523 (KLLGLVARWLCGARKLKKA) the chain is on the cytoplasmic side.

It belongs to the UDP-glycosyltransferase family.

It is found in the membrane. The catalysed reaction is glucuronate acceptor + UDP-alpha-D-glucuronate = acceptor beta-D-glucuronoside + UDP + H(+). Its function is as follows. UDP-glucuronosyltransferases catalyze phase II biotransformation reactions in which lipophilic substrates are conjugated with glucuronic acid to increase water solubility and enhance excretion. They are of major importance in the conjugation and subsequent elimination of potentially toxic xenobiotics and endogenous compounds. In Bos taurus (Bovine), this protein is UDP-glucuronosyltransferase 3A1 (UGT3A1).